A 76-amino-acid polypeptide reads, in one-letter code: UPF0346 protein LBA0976 (76 aa).

Belongs to the UPF0346 family.

This is UPF0346 protein LBA0976 from Lactobacillus acidophilus (strain ATCC 700396 / NCK56 / N2 / NCFM).